We begin with the raw amino-acid sequence, 3587 residues long: MEITFYPLTDAQKRIWYTEKFYPHTSISNLAGIGKLVSADAIDYVLVEQAIQEFIRRNDAMRLRLRLDENGEPVQYISEYRPVDIKHTDTTEDPNAIEFISQWSREETKKPLPLYDCDLFRFSLFTIKENEVWFYANVHHVISDGISMNILGNAIMHIYLELASGSETKEGISHSFIDHVLSEQEYAQSKRFEKDKAFWNKQFESVPELVSLKRNASAGGSLDAERFSKDVPEALHQQILSFCEANKVSVLSVFQSLLAAYLYRVSGQNDVVTGTFMGNRTNAKEKQMLGMFVSTVPLRTNIDGGQAFSEFVKDRMKDLMKTLRHQKYPYNLLINDLRETKSSLTKLFTVSLEYQVMQWQKEEDLAFLTEPIFSGSGLNDVSIHVKDRWDTGKLTIDFDYRTDLFSREEINMICERMITMLENALTHPEHTIDELTLISDAEKEKLLARAGGKSVSYRKDMTIPELFQEKAELLSDHPAVVFEDRTLSYRTLHEQSARIANVLKQKGVGPDSPVAVLIERSERMITAIMGILKAGGAYVPIDPGFPAERIQYILEDCGADFILTESKVAAPEADAELIDLDQAIEEGAEESLNADVNARNLAYIIYTSGTTGRPKGVMIEHRQVHHLVESLQQTIYQSGSQTLRMALLAPFHFDASVKQIFASLLLGQTLYIVPKKTVTNGAALTAYYRKNSIEATDGTPAHLQMLAAAGDFEGLKLKHMLIGGEGLSSVVADKLLKLFKEAGTAPRLTNVYGPTETCVDASVHPVIPENAVQSAYVPIGKALGNNRLYILDQKGRLQPEGVAGELYIAGDGVGRGYLHLPELTEEKFLQDPFVPGDRMYRTGDVVRWLPDGTIEYLGREDDQVKVRGYRIELGEIEAVIQQAPDVAKAVVLARPDEQGNLEVCAYVVQKPGSEFAPAGLREHAARQLPDYMVPAYFTEVTEIPLTPSGKVDRRKLFALEVKAVSGTAYTAPRNETEKAIAAIWQDVLNVEKAGIFDNFFETGGHSLKAMTLLTKIHKETGIEIPLQFLFEHPTITALAEEADHRESKAFAVIEPAEKQEHYPLSLAQQRTYIVSQFEDAGVGYNMPAAAILEGPLDIQKLERAFQGLIRRHESLRTSFVLENSTPRQKIHDSVDFNIEMIERGGRSDEAIMASFVRTFDLAKAPLFRIGLLGLEENRHMLLFDMHHLISDGVSIGIMLEELARIYKGEQLPDLRLQYKDYAVWQSRQAAEGYKKDQAYWKEVFAGELPVLQLLSDYPRPPVQSFEGDRVSIKLDAGVKDRLNRLAEQNGATLYMVMLSAYYTLLSKYTGQDDIIVGTPSAGRNHSDTEGIIGMFVNTLAIRSEVKQNETFTQLISRVRKRVLDAFSHQDYPFEWLVEDLNIPRDVSRHPLFDTMFSLQNATEGIPAVGDLSLSVQETNFKIAKFDLTVQARETDEGIEIDVDYSTKLFKQSTADRLLTHFARLLEDAAADPEKPISEYKLLSEEEAASQIQQFNPGRTPYPKDKTIVQLFEEQAANTPDHTALQYEGESLTYRELNERANRLARGILSLGAGEGRTAAVLCERSMDMIVSILAVLKSGSAYVPIDPEHPIQRMQHFFRDSGAKVLLTQRKLKALAEEAEFKGVIVLADEEESYHADARNLALPLDSAAMANLTYTSGTTGTPKGNIVTHANILRTVKETNYLSITEQDTILGLSNYVFDAFMFDMFGSLLNGAKLVLIPKETVLDMARLSRVIERENISILMITTALFHLLVDLNPACLSTLRKIMFGGERASVEHVRKALQTVGKGKLLHMYGPSESTVFATYHPVDELEEHTLSVPIGKPVSNTEVYILDRTGHVQPAGIAGELCVSGEGLVKGYYNRPELTEEKFVPHPFTSGERMYKTGDLARWLPNGDIEFIGRIDHQVKIRGQRIELGEIEHQLQTHDRVQESVVLAVDQGAGDKLLCAYYVGEGDISSQEMREHAAKDLPAYMVPAVFIQMDELPLTGNGKIDRRALPIPDANVSRGVSYVAPRNGTEQKVADIWAQVLQAEQVGAYDHFFDIGGHSLAGMKMLALVHQELGVELSLKDLFQSPTVEGLAQVIASAEKGTAASISPAEKQDTYPVSSPQKRMYVLQQLEDAQTSYNMPAVLRLTGELDVERLNSVMQQLMQRHEALRTTFEIKDGETVQRIWEEAECEIAYFEAPEEETERIVSEFIKPFKIDQLPLFRIGLIKHSDTEHVLLFDMHHIISDGASVGVLIEELSKLYDGETLEPLRIQYKDYAVWQQQFIQSELYKKQEEHWLKELDGELPVLTLPTDYSRPAVQTFEGDRIAFSLEAGKADALRRLAKETDSTLYMVLLASYSAFLSKISGQDDIIVGSPVAGRSQADVSRVIGMFVNTLALRTYPKGEKTFADYLNEVKETALSAFDAQDYPLEDLIGNVQVQRDTSRNPLFDAVFSMQNANIKDLTMKGIQLEPHPFERKTAKFDLTLTADETDGGLTFVLEYNTALFKQETIERWKQYWMELLDAVTGNPNQPLSSLSLVTETEKQALLEAWKGKALPVPTDKTVHQLFEETAQRHKDRPAVTYNGQSWTYGELNAKANRLARILMDCGISPDDRVGVLTKPSLEMSAAVLGVLKAGAAFVPIDPDYPDQRIEYILQDSGAKLLLKQEGISVPDSYTGDVILLDGSRTILSLPLDENDEENPETAVTAENLAYMIYTSGTTGQPKGVMVEHHALVNLCFWHHDAFSMTAEDRSAKYAGFGFDASIWEMFPTWTIGAELHVIEEAIRLDIVRLNDYFETNGVTITFLPTQLAEQFMELENTSLRVLLTGGDKLKRAVKKPYTLVNNYGPTENTVVATSAEIHPEEGSLSIGRAIANTRVYILGEGNQVQPEGVAGELCVAGRGLARGYLNREDETAKRFVADPFVPGERMYRTGDLVKWTGGGIEYIGRIDQQVKVRGYRIELSEIEVQLAQLSEVQDAAVTAVKDKGGNTAIAAYVTPESADIEALKSALKETLPDYMIPAFWVTLNELPVTANGKVDRKALPEPDIEAGSGEYKAPTTDMEELLAGIWQDVLGMSEVGVTDNFFSLGGDSIKGIQMASRLNQHGWKLEMKDLFQHPTIEELTQYVERAEGKQADQGPVEGEVILTPIQRWFFEKNFTNKHHWNQSVMLHAKKGFDPERVEKTLQALIEHHDALRMVYREGQEDVIQYNRGLEAASAQLEVIQIEGQAADYEDRIEREAERLQSSIDLQEGGLLKAGLFQAEDGDHLLLAIHHLVVDGVSWRILLEDFAAVYTQLEQGNEPVLPQKTHSFAEYAERLQDFANSKAFLKEKEYWRQLEEQAVAAKLPKDRESGDQRMKHTKTIEFSLTAEETEQLTTKVHEAYHTEMNDILLTAFGLAMKEWTGQDRVSVHLEGHGREEIIEDLTISRTVGWFTSMYPMVLDMKHADDLGYQLKQMKEDIRHVPNKGVGYGILRYLTAPEHKEDVAFSIQPDVSFNYLGQFDEMSDAGLFTRSELPSGQSLSPETEKPNALDVVGYIENGKLTMSLAYHSLEFHEKTVQTFSDSFKAHLLRIIEHCLSQDGTELTPSDLGDDDLTLDELDKLMEIF.

Carrier domains lie at 971-1046, 2010-2085, and 3038-3112; these read APRN…DHRE, APRN…ASAE, and APTT…ERAE. Serine 1006, serine 2045, and serine 3073 each carry O-(pantetheine 4'-phosphoryl)serine.

Belongs to the ATP-dependent AMP-binding enzyme family. The cofactor is pantetheine 4'-phosphate.

It functions in the pathway antibiotic biosynthesis; surfactin biosynthesis. Its function is as follows. This protein is a multifunctional enzyme able to activate and polymerize the amino acids Leu, Glu, Asp and Val. Activation sites for these AA consist of individual domains. This chain is Surfactin synthase subunit 1 (srfAA), found in Bacillus subtilis (strain 168).